The primary structure comprises 916 residues: Isoleucine--tRNA ligase (916 aa).

The 'HIGH' region motif lies at 57–67; sequence PYANGNLHMGH. Glu-554 contacts L-isoleucyl-5'-AMP. Residues 595–599 carry the 'KMSKS' region motif; the sequence is KMSKS. ATP is bound at residue Lys-598. The Zn(2+) site is built by Cys-885, Cys-888, Cys-905, and Cys-908.

This sequence belongs to the class-I aminoacyl-tRNA synthetase family. IleS type 1 subfamily. As to quaternary structure, monomer. It depends on Zn(2+) as a cofactor.

It localises to the cytoplasm. The catalysed reaction is tRNA(Ile) + L-isoleucine + ATP = L-isoleucyl-tRNA(Ile) + AMP + diphosphate. Functionally, catalyzes the attachment of isoleucine to tRNA(Ile). As IleRS can inadvertently accommodate and process structurally similar amino acids such as valine, to avoid such errors it has two additional distinct tRNA(Ile)-dependent editing activities. One activity is designated as 'pretransfer' editing and involves the hydrolysis of activated Val-AMP. The other activity is designated 'posttransfer' editing and involves deacylation of mischarged Val-tRNA(Ile). The protein is Isoleucine--tRNA ligase of Staphylococcus haemolyticus (strain JCSC1435).